The sequence spans 166 residues: uncharacterized protein (166 aa).

Pentapeptide repeat domains are found at residues 38-77 (GECLDCNLAGADLREFNLENARLNRSDLSGANLSGVNLRR), 78-117 (ALLDRANLTGANLSETDLTEAALTEANLAGADLSGANLER), and 118-157 (SFLRDVDLTGANLKGANLAWANLTAANLTDVDLEEAEFWE).

This is an uncharacterized protein from Synechocystis sp. (strain ATCC 27184 / PCC 6803 / Kazusa).